Here is a 123-residue protein sequence, read N- to C-terminus: Small ribosomal subunit protein uS12cz/uS12cy/uS12cx/uS12w (123 aa).

Over residues Met1–Gln13 the composition is skewed to polar residues. The disordered stretch occupies residues Met1–Arg30. Residues Pro14 to Arg30 are compositionally biased toward basic residues.

This sequence belongs to the universal ribosomal protein uS12 family. As to quaternary structure, part of the 30S ribosomal subunit.

It is found in the plastid. Its subcellular location is the chloroplast. With S4 and S5 plays an important role in translational accuracy. Located at the interface of the 30S and 50S subunits. This is Small ribosomal subunit protein uS12cz/uS12cy/uS12cx/uS12w (rps12-A) from Pelargonium hortorum (Common geranium).